Here is a 236-residue protein sequence, read N- to C-terminus: E3 ubiquitin-protein ligase RNF187 (236 aa).

The RING-type zinc finger occupies 12-53 (CALCQRAPREPVRADCGHRFCRACVVRFWAEEDGPFPCPECA). Residues Arg-98 and Arg-109 each carry the asymmetric dimethylarginine; by PRMT1 modification. Lys-195 is covalently cross-linked (Glycyl lysine isopeptide (Lys-Gly) (interchain with G-Cter in ubiquitin)). A Phosphoserine modification is found at Ser-200. Residues Lys-224 and Lys-225 each participate in a glycyl lysine isopeptide (Lys-Gly) (interchain with G-Cter in ubiquitin) cross-link.

In terms of assembly, homodimer. Interacts with JUN, independently of JUN phosphorylation. Interacts (via C-terminus) with TRIM7. Post-translationally, ubiquitinated; undergoes 'Lys-48'-linked autoubiquitination in the absence of growth factors and MAP3K1-induced 'Lys-63'-linked polyubiquitination. 'Lys-48'-autoubiquitination leads to degradation by the proteasome, while MAP3K1-induced 'Lys-63'-linked polyubiquitination results in the stabilization of the protein. 'Lys-48'- and 'Lys-63'-linked polyubiquitinations occur most probably on the same 3 C-terminal lysine residues (Lys-195, Lys-224 and Lys-225) and are thus mutually exclusive. Other sites of ubiquitination are not excluded. 'Lys-63'-linked polyubiquitination by TRIM7 in response to growth factor signaling via the MEK/ERK pathway enhances protein stability. Arginine methylation by PRMT1 stabilizes RNF187 by facilitating K63-linked ubiquitin chain formation, and enables dimerization, c-Jun interaction and subsequent AP1 target gene expression.

The protein resides in the cytoplasm. It is found in the nucleus. It catalyses the reaction S-ubiquitinyl-[E2 ubiquitin-conjugating enzyme]-L-cysteine + [acceptor protein]-L-lysine = [E2 ubiquitin-conjugating enzyme]-L-cysteine + N(6)-ubiquitinyl-[acceptor protein]-L-lysine.. It participates in protein modification; protein ubiquitination. In terms of biological role, E3 ubiquitin-protein ligase that acts as a coactivator of JUN-mediated gene activation in response to growth factor signaling via the MAP3K1 pathway, independently from MAPK8. This is E3 ubiquitin-protein ligase RNF187 (Rnf187) from Mus musculus (Mouse).